A 139-amino-acid chain; its full sequence is uncharacterized protein (139 aa).

Residues 1–11 show a composition bias toward polar residues; that stretch reads MALSMSLSSDI. 2 disordered regions span residues 1–80 and 100–139; these read MALS…AAAA and ASSP…LARS. Positions 63–80 are enriched in low complexity; sequence GAGSASAGGSRLAAAAAA.

This is an uncharacterized protein from Homo sapiens (Human).